Consider the following 929-residue polypeptide: Urea transporter 2 (929 aa).

A compositionally biased stretch (basic and acidic residues) spans 1-11; sequence MSDHPLKEMSD. The tract at residues 1-89 is disordered; the sequence is MSDHPLKEMS…KRRESELPRR (89 aa). Low complexity predominate over residues 31 to 42; the sequence is SELSSPTWPSSS. Positions 55–88 are enriched in basic and acidic residues; sequence PEEKDLRSSDEDSHIVKIEKPNERSKRRESELPR. A run of 9 helical transmembrane segments spans residues 133–155, 162–179, 184–204, 212–232, 241–261, 310–330, 349–371, 378–399, and 400–420; these read GAAQ…GLLI, IAGA…LALS, AIAS…VAVF, WWLL…SSAL, LPVF…ATGH, GGVI…HAAI, IYTG…MFYV, LLAL…NMMA, and VVGV…FLLL. Positions 451–480 are disordered; the sequence is SDEQKPPNGGGGEQSHGGGQRKAEEGSETV. Gly residues predominate over residues 458–470; sequence NGGGGEQSHGGGQ. The residue at position 486 (Ser486) is a Phosphoserine. Transmembrane regions (helical) follow at residues 609–629, 647–667, 675–695, and 704–724; these read GILI…SGCL, AIAA…MAVF, WWLL…SSAL, and LPVF…ATGH. An N-linked (GlcNAc...) asparagine glycan is attached at Asn742. 4 consecutive transmembrane segments (helical) span residues 773–793, 812–832, 841–861, and 863–883; these read GGIF…HAAI, IYFG…GGMF, LLAI…ANML, and VFGL…FLLL.

It belongs to the urea transporter family. As to quaternary structure, interacts with SNAPIN which enhances its urea transport activity. As to expression, expressed in the inner medulla of the kidney. Expressed in both the inner and outer renal medulla of the kidney.

The protein localises to the apical cell membrane. It is found in the cell membrane. The enzyme catalyses urea(in) = urea(out). Its activity is regulated as follows. Inhibited by phloretin. Activated by vasopressin, forskolin, 3-isobutyl-1-methylxanthine (IBMX) and cAMP. Inhibited by phloretin. With respect to regulation, inhibited by urea analogs and phloretin and activated by forskolin. Its activity is regulated as follows. Inhibited by phloretin and activated by forskolin. Mediates the transport of urea driven by a concentration gradient across the cell membrane of the kidney inner medullary collecting duct which is critical to the urinary concentrating mechanism. The protein is Urea transporter 2 (Slc14a2) of Rattus norvegicus (Rat).